The primary structure comprises 289 residues: MSNQNSKKHLGHTARKRFGQNFLHDMNVIHNIVSAINPKNGQFLLEIGPGLGALTEPVAEQVDKLTVVELDRDLAERLRHHPFLNHKLTIIEQDALRFNFREYFESLELREGEGVRVFGNLPYNISTPLMFHLFKFHDLIQDMHFMLQKEVVKRLCAAPNSKAYGRLTIMAQYYCQVMPVLEVPPTAFKPAPKVDSAVVRLMPHKVLPHPVKDVYWLNRVTTQAFNQRRKTLRNALSTLFSPEQLEALSIDLNARAENLSIADYARLANWLYDNPPAVDNQKEIIDEDI.

Residues Asn-21, Leu-23, Gly-48, Glu-69, Asp-94, and Asn-120 each coordinate S-adenosyl-L-methionine.

It belongs to the class I-like SAM-binding methyltransferase superfamily. rRNA adenine N(6)-methyltransferase family. RsmA subfamily.

The protein resides in the cytoplasm. It carries out the reaction adenosine(1518)/adenosine(1519) in 16S rRNA + 4 S-adenosyl-L-methionine = N(6)-dimethyladenosine(1518)/N(6)-dimethyladenosine(1519) in 16S rRNA + 4 S-adenosyl-L-homocysteine + 4 H(+). Its function is as follows. Specifically dimethylates two adjacent adenosines (A1518 and A1519) in the loop of a conserved hairpin near the 3'-end of 16S rRNA in the 30S particle. May play a critical role in biogenesis of 30S subunits. This is Ribosomal RNA small subunit methyltransferase A from Actinobacillus pleuropneumoniae serotype 7 (strain AP76).